The primary structure comprises 214 residues: Exosome complex component RRP46 homolog (214 aa).

The protein belongs to the RNase PH family. As to quaternary structure, homodimer. Component of the RNA exosome complex. Interacts with crn-4; interaction promotes the DNase activity of crn-4. Interacts with crn-3, cps-6 and cyn-13.

The protein resides in the cytoplasm. It is found in the nucleus. Its function is as follows. Non-catalytic component of the RNA exosome complex which has 3'-&gt;5' exoribonuclease activity and participates in a multitude of cellular RNA processing and degradation events. Involved in apoptotic DNA degradation. In vitro, does not bind or digest single-stranded RNA. In vitro, binds to double-stranded DNA without detectable DNase activity. The polypeptide is Exosome complex component RRP46 homolog (Caenorhabditis elegans).